We begin with the raw amino-acid sequence, 374 residues long: MNSPISLDMGAITYNMDDLYKELAIYSNSTEIPLQDSIFCSTEEGPLLTSFKTIFMPVAYSLIFLLGMMGNILVLVILERHRHTRSSTETFLFHLAVADLLLVFILPFAVAEGSVGWVLGTFLCKTVIALHKINFYCSSLLLACIAVDRYLAIVHAVHAYRRRRLLSIHITCSTIWLAGFLFALPELLFAKVVQPHNNESLPQCIFSQENEAETRAWFASRFLYHTGGFLLPMLVMAWCYVGVVHRLLQAQRRPQRQKAVRVAILVTSIFLLCWSPYHIVIFLDTLERLKAVNSSCELSGYLSVAITLCEFLGLAHCCLNPMLYTFAGVKFRSDLSRLLTKLGCAGPASLCQLFPGWRKSSLSESENATSLTTF.

Residues 1–57 lie on the Extracellular side of the membrane; it reads MNSPISLDMGAITYNMDDLYKELAIYSNSTEIPLQDSIFCSTEEGPLLTSFKTIFMP. Asn28 carries N-linked (GlcNAc...) asparagine glycosylation. A helical transmembrane segment spans residues 58–78; the sequence is VAYSLIFLLGMMGNILVLVIL. Residues 79 to 90 are Cytoplasmic-facing; that stretch reads ERHRHTRSSTET. Residues 91-111 form a helical membrane-spanning segment; that stretch reads FLFHLAVADLLLVFILPFAVA. Residues 112 to 126 are Extracellular-facing; the sequence is EGSVGWVLGTFLCKT. The cysteines at positions 124 and 204 are disulfide-linked. A helical transmembrane segment spans residues 127–147; that stretch reads VIALHKINFYCSSLLLACIAV. Topologically, residues 148-169 are cytoplasmic; that stretch reads DRYLAIVHAVHAYRRRRLLSIH. The chain crosses the membrane as a helical span at residues 170–190; that stretch reads ITCSTIWLAGFLFALPELLFA. The Extracellular portion of the chain corresponds to 191-221; the sequence is KVVQPHNNESLPQCIFSQENEAETRAWFASR. An N-linked (GlcNAc...) asparagine glycan is attached at Asn198. The helical transmembrane segment at 222–242 threads the bilayer; it reads FLYHTGGFLLPMLVMAWCYVG. Residues 243 to 261 lie on the Cytoplasmic side of the membrane; that stretch reads VVHRLLQAQRRPQRQKAVR. The helical transmembrane segment at 262–282 threads the bilayer; sequence VAILVTSIFLLCWSPYHIVIF. Residues 283 to 306 lie on the Extracellular side of the membrane; sequence LDTLERLKAVNSSCELSGYLSVAI. The chain crosses the membrane as a helical span at residues 307–327; the sequence is TLCEFLGLAHCCLNPMLYTFA. Residues 328–374 lie on the Cytoplasmic side of the membrane; that stretch reads GVKFRSDLSRLLTKLGCAGPASLCQLFPGWRKSSLSESENATSLTTF.

This sequence belongs to the G-protein coupled receptor 1 family. Expressed in neuronal and lymphatic tissue.

The protein localises to the cell membrane. Functionally, cytokine receptor that binds to B-lymphocyte chemoattractant (BLC). Involved in B-cell migration into B-cell follicles of spleen and Peyer patches but not into those of mesenteric or peripheral lymph nodes. This is C-X-C chemokine receptor type 5 (Cxcr5) from Rattus norvegicus (Rat).